The following is a 252-amino-acid chain: Proteasome subunit alpha type-7-1B (252 aa).

This sequence belongs to the peptidase T1A family. In terms of assembly, the 26S proteasome consists of a 20S proteasome core and two 19S regulatory subunits. The 20S proteasome core is composed of 28 subunits that are arranged in four stacked rings, resulting in a barrel-shaped structure. The two end rings are each formed by seven alpha subunits, and the two central rings are each formed by seven beta subunits. The catalytic chamber with the active sites is on the inside of the barrel. Testis specific.

The protein localises to the cytoplasm. The protein resides in the nucleus. Functionally, the proteasome is a multicatalytic proteinase complex which is characterized by its ability to cleave peptides with Arg, Phe, Tyr, Leu, and Glu adjacent to the leaving group at neutral or slightly basic pH. The proteasome has an ATP-dependent proteolytic activity. The sequence is that of Proteasome subunit alpha type-7-1B (Prosalpha4T2) from Drosophila melanogaster (Fruit fly).